Consider the following 541-residue polypeptide: Circadian clock oscillator protein KaiC (541 aa).

The disordered stretch occupies residues 1–40 (MNQSLGPSEPEKPQDNTAEDSTEPTPDNHRADLSELRGIP). 2 consecutive KaiC domains span residues 21–268 (STEP…INIF) and 282–541 (VRVS…EEGL). A compositionally biased stretch (basic and acidic residues) spans 26-35 (PDNHRADLSE). 19 residues coordinate ATP: G70, T71, G72, K73, T74, L75, S110, K245, L246, R247, T249, H251, T261, T311, G312, T313, G314, K315, and T316. T74 contacts Mg(2+). Mg(2+) contacts are provided by T316 and E339. W352 serves as a coordination point for ATP. The residue at position 452 (S452) is a Phosphoserine; by autocatalysis. T453 carries the phosphothreonine; by autocatalysis modification. ATP-binding residues include R472, K478, M479, R480, S482, H484, and K486.

The protein belongs to the KaiC family. As to quaternary structure, homohexamer; hexamerization is dependent on ATP-binding. The KaiABC complex composition changes during the circadian cycle to control KaiC phosphorylation. Complexes KaiC(6), KaiA(2-4):KaiC(6), KaiB(6):KaiC(6) and KaiC(6):KaiB(6):KaiA(12) are among the most important forms, many form cooperatively. KaiC interacts with SasA, activating its autokinase function and leading to RpaA activation. Mg(2+) is required as a cofactor. Phosphorylated on serine and threonine residues by autocatalysis. Has a 4 step phosphorylation cycle; the autokinase acts first on Thr-453, then Ser-452. When Ser-452 is modified KaiC switches to an autophosphatase mode, acting first on phospho-Thr-453 then phospho-Ser-452.

The catalysed reaction is L-seryl-[protein] + ATP = O-phospho-L-seryl-[protein] + ADP + H(+). It carries out the reaction L-threonyl-[protein] + ATP = O-phospho-L-threonyl-[protein] + ADP + H(+). It catalyses the reaction ATP + H2O = ADP + phosphate + H(+). With respect to regulation, the interaction with KaiA enhances its phosphorylation status, while the interaction with KaiB decreases it. Functionally, central component of the KaiABC oscillator complex, which constitutes the main circadian regulator in cyanobacteria. Complex composition changes during the circadian cycle to control KaiC phosphorylation. KaiA stimulates KaiC autophosphorylation, while KaiB sequesters KaiA, leading to KaiC autodephosphorylation. Clock output pathways impact the RpaA transcriptional regulator. KaiC enhances the autophosphorylation activity of SasA, which then transfers its phosphate group to RpaA to activate it. KaiB and KaiC together enhance the phospho-RpaA dephosphatase activity of CikA. In terms of biological role, has a weak, temperature-independent ATPase activity; ATPase activity defines the circadian period. The phosphorylation state of KaiC modulates its ATPase activity and effects KaiB binding. This Parathermosynechococcus lividus (Thermostichus lividus) protein is Circadian clock oscillator protein KaiC.